We begin with the raw amino-acid sequence, 507 residues long: GMP synthase [glutamine-hydrolyzing] (507 aa).

In terms of domain architecture, Glutamine amidotransferase type-1 spans 4-193; the sequence is KIIILDFGSQ…VVDVCGCKQD (190 aa). Cys-79 functions as the Nucleophile in the catalytic mechanism. Active-site residues include His-167 and Glu-169. In terms of domain architecture, GMPS ATP-PPase spans 194 to 382; the sequence is WSPASFIEST…LGMPEHLITR (189 aa). Residue 221–227 coordinates ATP; the sequence is SGGVDSS.

Homodimer.

The enzyme catalyses XMP + L-glutamine + ATP + H2O = GMP + L-glutamate + AMP + diphosphate + 2 H(+). Its pathway is purine metabolism; GMP biosynthesis; GMP from XMP (L-Gln route): step 1/1. Its function is as follows. Catalyzes the synthesis of GMP from XMP. The polypeptide is GMP synthase [glutamine-hydrolyzing] (Bacteroides fragilis (strain ATCC 25285 / DSM 2151 / CCUG 4856 / JCM 11019 / LMG 10263 / NCTC 9343 / Onslow / VPI 2553 / EN-2)).